Consider the following 403-residue polypeptide: MSKFNRIHLVVLDSVGIGAAPDANNFVNAGVPDGASDTLGHISKTVGLNVPNMAKIGLGNIPRETPLKTVAAESNPTGYATKLEEVSLGKDTMTGHWEIMGLNITEPFDTFWNGFPEEILTKIEEFSGRKVIREANKPYSGTAVIDDFGPRQMETGELIIYTSADPVLQIAAHEDIIPLDELYRICEYARSITLERPALLGRIIARPYVGEPGNFTRTANRRDLAVSPFSPTVLDKLNEAGIDTYAVGKINDIFNGAGINHDMGHNKSNSHGIDTLLKTMGLAEFEKGFSFTNLVDFDALYGHRRNAHGYRDCLHEFDERLPEIIAAMRENDLLLITADHGNDPTYAGTDHTREYIPLLAYSPAFKGNGLIPVGHFADISATVADNFGVETAMIGESFLDKLV.

Positions 13, 298, 303, 339, 340, and 351 each coordinate Mn(2+).

This sequence belongs to the phosphopentomutase family. It depends on Mn(2+) as a cofactor.

It localises to the cytoplasm. It carries out the reaction 2-deoxy-alpha-D-ribose 1-phosphate = 2-deoxy-D-ribose 5-phosphate. It catalyses the reaction alpha-D-ribose 1-phosphate = D-ribose 5-phosphate. It functions in the pathway carbohydrate degradation; 2-deoxy-D-ribose 1-phosphate degradation; D-glyceraldehyde 3-phosphate and acetaldehyde from 2-deoxy-alpha-D-ribose 1-phosphate: step 1/2. Its function is as follows. Isomerase that catalyzes the conversion of deoxy-ribose 1-phosphate (dRib-1-P) and ribose 1-phosphate (Rib-1-P) to deoxy-ribose 5-phosphate (dRib-5-P) and ribose 5-phosphate (Rib-5-P), respectively. The polypeptide is Phosphopentomutase (Streptococcus pneumoniae (strain JJA)).